The sequence spans 231 residues: S-norcoclaurine synthase 2 (231 aa).

107–109 (YKE) provides a ligand contact to dopamine. The active-site Proton donor is lysine 121. Residue aspartate 140 participates in (4-hydroxyphenyl)acetaldehyde binding. A helical membrane pass occupies residues 210–230 (LLLCLIICLVIAGGMFVAGVP).

This sequence belongs to the BetVI family. In terms of tissue distribution, expressed in roots, stems and leaves. Detected in flower buds and germinating seeds. Low expression in carpels. Restricted to sieve elements of the phloem adjacent or proximal to laticifers.

Its subcellular location is the endoplasmic reticulum membrane. The protein resides in the vacuole membrane. It catalyses the reaction (4-hydroxyphenyl)acetaldehyde + dopamine = (S)-norcoclaurine + H2O. It functions in the pathway alkaloid biosynthesis; (S)-reticuline biosynthesis. Its activity is regulated as follows. Activity doubles within 5 hours of elicitor treatment and continues to increase for at least 80 hours. Its function is as follows. Involved in the biosynthesis of (S)-coclaurine, the common precursor of all benzylisoquinoline alkaloids such as morphine, sanguinarine, codeine or papaverine. Condenses dopamine and 4-hydroxyphenylacetaldehyde. This chain is S-norcoclaurine synthase 2, found in Papaver somniferum (Opium poppy).